The following is a 298-amino-acid chain: GTPase Era (298 aa).

The Era-type G domain maps to 8 to 176 (HCGSVAVIGR…VRDVLKLLPE (169 aa)). The segment at 16–23 (GRPNVGKS) is G1. Residue 16 to 23 (GRPNVGKS) coordinates GTP. The G2 stretch occupies residues 42 to 46 (QTTRH). Residues 63 to 66 (DTPG) form a G3 region. GTP contacts are provided by residues 63–67 (DTPGL) and 125–128 (NKID). The segment at 125–128 (NKID) is G4. Positions 155–157 (ISA) are G5. The KH type-2 domain occupies 199–283 (VREQLMRQLG…FLETWVRVRE (85 aa)).

The protein belongs to the TRAFAC class TrmE-Era-EngA-EngB-Septin-like GTPase superfamily. Era GTPase family. In terms of assembly, monomer.

The protein localises to the cytoplasm. It localises to the cell inner membrane. In terms of biological role, an essential GTPase that binds both GDP and GTP, with rapid nucleotide exchange. Plays a role in 16S rRNA processing and 30S ribosomal subunit biogenesis and possibly also in cell cycle regulation and energy metabolism. The sequence is that of GTPase Era from Stenotrophomonas maltophilia (strain K279a).